The following is a 273-amino-acid chain: Hydroxyethylthiazole kinase (273 aa).

Residue Met47 coordinates substrate. The ATP site is built by Arg123 and Thr172. Gly199 contacts substrate.

This sequence belongs to the Thz kinase family. Mg(2+) serves as cofactor.

The catalysed reaction is 5-(2-hydroxyethyl)-4-methylthiazole + ATP = 4-methyl-5-(2-phosphooxyethyl)-thiazole + ADP + H(+). The protein operates within cofactor biosynthesis; thiamine diphosphate biosynthesis; 4-methyl-5-(2-phosphoethyl)-thiazole from 5-(2-hydroxyethyl)-4-methylthiazole: step 1/1. In terms of biological role, catalyzes the phosphorylation of the hydroxyl group of 4-methyl-5-beta-hydroxyethylthiazole (THZ). This chain is Hydroxyethylthiazole kinase, found in Ruminiclostridium cellulolyticum (strain ATCC 35319 / DSM 5812 / JCM 6584 / H10) (Clostridium cellulolyticum).